The primary structure comprises 270 residues: Ribosomal RNA small subunit methyltransferase A (270 aa).

Positions 18, 20, 45, 66, 91, and 112 each coordinate S-adenosyl-L-methionine.

The protein belongs to the class I-like SAM-binding methyltransferase superfamily. rRNA adenine N(6)-methyltransferase family. RsmA subfamily.

The protein resides in the cytoplasm. It carries out the reaction adenosine(1518)/adenosine(1519) in 16S rRNA + 4 S-adenosyl-L-methionine = N(6)-dimethyladenosine(1518)/N(6)-dimethyladenosine(1519) in 16S rRNA + 4 S-adenosyl-L-homocysteine + 4 H(+). Functionally, specifically dimethylates two adjacent adenosines (A1518 and A1519) in the loop of a conserved hairpin near the 3'-end of 16S rRNA in the 30S particle. May play a critical role in biogenesis of 30S subunits. In Shewanella piezotolerans (strain WP3 / JCM 13877), this protein is Ribosomal RNA small subunit methyltransferase A.